We begin with the raw amino-acid sequence, 343 residues long: Galactoside alpha-(1,2)-fucosyltransferase 2 (343 aa).

Residues 1–14 lie on the Cytoplasmic side of the membrane; it reads MLVVQMPFSFPVAH. The helical; Signal-anchor for type II membrane protein transmembrane segment at 15–28 threads the bilayer; it reads FILFVFTVSTIFHI. At 29 to 343 the chain is on the lumenal side; sequence QQRLAKIQAM…AADLSPLLKH (315 aa). Asn188, Asn282, and Asn308 each carry an N-linked (GlcNAc...) asparagine glycan.

This sequence belongs to the glycosyltransferase 11 family.

The protein localises to the golgi apparatus. It is found in the golgi stack membrane. The enzyme catalyses a beta-D-galactosyl-(1-&gt;3)-N-acetyl-beta-D-glucosaminyl derivative + GDP-beta-L-fucose = an alpha-L-Fuc-(1-&gt;2)-beta-D-Gal-(1-&gt;3)-beta-D-GlcNAc derivative + GDP + H(+). It catalyses the reaction a beta-D-galactosyl-(1-&gt;4)-N-acetyl-beta-D-glucosaminyl derivative + GDP-beta-L-fucose = an alpha-L-Fuc-(1-&gt;2)-beta-D-Gal-(1-&gt;4)-beta-D-GlcNAc derivative + GDP + H(+). It carries out the reaction a neolactoside nLc4Cer + GDP-beta-L-fucose = a neolactoside IV(2)-alpha-Fuc-nLc4Cer + GDP + H(+). The catalysed reaction is a neolactoside nLc4Cer(d18:1(4E)) + GDP-beta-L-fucose = a neolactoside IV(2)-alpha-Fuc-nLc4Cer(d18:1(4E)) + GDP + H(+). The enzyme catalyses a ganglioside GM1 + GDP-beta-L-fucose = a ganglioside Fuc-GM1 + GDP + H(+). It catalyses the reaction a ganglioside GA1 + GDP-beta-L-fucose = a ganglioside Fuc-GA1 + GDP + H(+). It carries out the reaction Lc4Cer + GDP-beta-L-fucose = alpha-L-fucosyl-(1-&gt;2)-beta-D-galactosyl-(1-&gt;3)-N-acetyl-beta-D-glucosaminyl-(1-&gt;3)-beta-D-galactosyl-(1-&gt;4)-beta-D-glucosyl-(1&lt;-&gt;1')-ceramide + GDP + H(+). The catalysed reaction is a beta-D-Gal-(1-&gt;3)-beta-D-GlcNAc-(1-&gt;3)-beta-D-Gal-(1-&gt;4)-beta-D-Glc-(1&lt;-&gt;1')-Cer(d18:1(4E)) + GDP-beta-L-fucose = alpha-L-fucosyl-(1-&gt;2)- beta-D-galactosyl-(1-&gt;3)-N-acetyl-beta-D-glucosaminyl-(1-&gt;3)-beta-D-galactosyl-(1-&gt;4)-beta-D-glucosyl-(1&lt;-&gt;1')-N-acylsphing-4-enine + GDP + H(+). The enzyme catalyses a ganglioside GD1b + GDP-beta-L-fucose = a ganglioside Fuc-GD1b + GDP + H(+). It catalyses the reaction a ganglioside GM1 (d18:1(4E)) + GDP-beta-L-fucose = a ganglioside Fuc-GM1 (d18:1(4E)) + GDP + H(+). It carries out the reaction a globoside GalGb4Cer (d18:1(4E)) + GDP-beta-L-fucose = a globoside Globo-H (d18:1(4E)) + GDP + H(+). The catalysed reaction is a lactoside III(4)-a-Fuc-Lc4Cer + GDP-beta-L-fucose = a lactoside IV(2),III(4)-a-[Fuc]2-Lc4Cer + GDP + H(+). The enzyme catalyses beta-D-galactosyl-(1-&gt;3)-N-acetyl-D-galactosamine + GDP-beta-L-fucose = alpha-L-fucosyl-(1-&gt;2)-beta-D-galactosyl-(1-&gt;3)-N-acetyl-D-galactosamine + GDP + H(+). It functions in the pathway protein modification; protein glycosylation. Functionally, catalyzes the transfer of L-fucose, from a guanosine diphosphate-beta-L-fucose, to the terminal galactose on both O- and N-linked glycans chains of cell surface glycoproteins and glycolipids and the resulting epitope regulates several processes such as cell-cell interaction including host-microbe interaction, cell surface expression and cell proliferation. Preferentially fucosylates gangliosides GA1 and GM1 in the antrum, cecum and colon and in the female reproductive organs. Fucosylated host glycoproteins or glycolipids mediate interaction with intestinal microbiota influencing its composition. Creates a soluble precursor oligosaccharide FuC-alpha ((1,2)Galbeta-) called the H antigen which is an essential substrate for the final step in the soluble ABO blood group antigen synthesis pathway. The sequence is that of Galactoside alpha-(1,2)-fucosyltransferase 2 from Pongo pygmaeus (Bornean orangutan).